Here is a 245-residue protein sequence, read N- to C-terminus: MRDGIKVRLVNYTKKPLETVTWAALISYWDEWETEAFERLGEKDVEMHLPRILGYGHESILEHAVLTFAIEGCSRVCSHQLVRHRIASYTQQSMRYIKINPRDVEETFVIPESVKKNPELYEKWKKLMRETIQLYEETYKAGVHQEDARFILPQAVRTKIVVTMNLRELKHFLGLRACERAQWEIRDVAWKMLGEIAKNEELRPIIRWAKLGPRCVQLGYCPEGELMPPGCWKRTREKWKEVALG.

In terms of domain architecture, ThyX spans 5 to 210 (IKVRLVNYTK…ELRPIIRWAK (206 aa)). FAD is bound by residues S59, 83-85 (RHR), and Q91. DUMP contacts are provided by residues 80–83 (QLVR), 91–95 (QQSMR), and R149. Positions 83–93 (RHRIASYTQQS) match the ThyX motif motif. Residues 165-167 (NLR) and H171 each bind FAD. Residue R176 coordinates dUMP. The Involved in ionization of N3 of dUMP, leading to its activation role is filled by R176.

This sequence belongs to the thymidylate synthase ThyX family. Homotetramer. It depends on FAD as a cofactor.

It catalyses the reaction dUMP + (6R)-5,10-methylene-5,6,7,8-tetrahydrofolate + NADPH + H(+) = dTMP + (6S)-5,6,7,8-tetrahydrofolate + NADP(+). It functions in the pathway pyrimidine metabolism; dTTP biosynthesis. In terms of biological role, catalyzes the reductive methylation of 2'-deoxyuridine-5'-monophosphate (dUMP) to 2'-deoxythymidine-5'-monophosphate (dTMP) while utilizing 5,10-methylenetetrahydrofolate (mTHF) as the methyl donor, and NADPH and FADH(2) as the reductant. The chain is Flavin-dependent thymidylate synthase from Thermococcus onnurineus (strain NA1).